We begin with the raw amino-acid sequence, 153 residues long: Membrane protein FAM174B (153 aa).

An N-terminal signal peptide occupies residues 1-27; that stretch reads MSALPPQPPPPLLLLLLALLAAPAALA. Residues 28 to 84 are Extracellular-facing; it reads RRAESASASQPEAEHQPPPGPGNATQLGSGMAGGGSSNSSVDAVVTRISSLLRDLPT. The interval 31-67 is disordered; sequence ESASASQPEAEHQPPPGPGNATQLGSGMAGGGSSNSS. N-linked (GlcNAc...) asparagine glycosylation is present at Asn50. A helical transmembrane segment spans residues 85-105; the sequence is LKATVIVACAFSALLIACLLL. At 106–153 the chain is on the cytoplasmic side; the sequence is RVFRLGKRLKKTRKYDIITTPAERVEMAPLNEEDDEDEDSTVFDIKYR.

Belongs to the FAM174 family.

It localises to the cell membrane. The protein localises to the golgi apparatus. Functionally, essential for Golgi structural integrity. The protein is Membrane protein FAM174B (Fam174b) of Mus musculus (Mouse).